We begin with the raw amino-acid sequence, 272 residues long: Shikimate dehydrogenase (NADP(+)) (272 aa).

Shikimate contacts are provided by residues 14–16 (SKS) and Thr-61. The Proton acceptor role is filled by Lys-65. Position 77 (Glu-77) interacts with NADP(+). Residues Asn-86 and Asp-102 each contribute to the shikimate site. NADP(+)-binding positions include 126 to 130 (GAGGA), 149 to 154 (NRTASR), and Met-213. Tyr-215 contacts shikimate. NADP(+) is bound at residue Gly-237.

Belongs to the shikimate dehydrogenase family. Homodimer.

The enzyme catalyses shikimate + NADP(+) = 3-dehydroshikimate + NADPH + H(+). It functions in the pathway metabolic intermediate biosynthesis; chorismate biosynthesis; chorismate from D-erythrose 4-phosphate and phosphoenolpyruvate: step 4/7. In terms of biological role, involved in the biosynthesis of the chorismate, which leads to the biosynthesis of aromatic amino acids. Catalyzes the reversible NADPH linked reduction of 3-dehydroshikimate (DHSA) to yield shikimate (SA). This is Shikimate dehydrogenase (NADP(+)) from Salmonella enteritidis PT4 (strain P125109).